A 394-amino-acid chain; its full sequence is tRNA-specific 2-thiouridylase MnmA (394 aa).

Residues 30 to 37 and Leu56 each bind ATP; that span reads AMSGGVDS. Cys124 acts as the Nucleophile in catalysis. A disulfide bond links Cys124 and Cys220. ATP is bound at residue Gly148. The interval 170-172 is interaction with tRNA; sequence RDQ. The active-site Cysteine persulfide intermediate is the Cys220.

The protein belongs to the MnmA/TRMU family.

The protein resides in the cytoplasm. The enzyme catalyses S-sulfanyl-L-cysteinyl-[protein] + uridine(34) in tRNA + AH2 + ATP = 2-thiouridine(34) in tRNA + L-cysteinyl-[protein] + A + AMP + diphosphate + H(+). Catalyzes the 2-thiolation of uridine at the wobble position (U34) of tRNA, leading to the formation of s(2)U34. This chain is tRNA-specific 2-thiouridylase MnmA, found in Hyphomonas neptunium (strain ATCC 15444).